Consider the following 143-residue polypeptide: Large ribosomal subunit protein bL28c (143 aa).

A chloroplast-targeting transit peptide spans 1 to 66 (MTTMATQGAW…SFPGIQPIVA (66 aa)).

This sequence belongs to the bacterial ribosomal protein bL28 family. As to quaternary structure, part of the 50S ribosomal subunit.

It is found in the plastid. The protein resides in the chloroplast. This Arabidopsis thaliana (Mouse-ear cress) protein is Large ribosomal subunit protein bL28c (RPL28).